A 457-amino-acid chain; its full sequence is Glucuronide carrier protein homolog (457 aa).

Over 1–11 (MNQQLSWRTIV) the chain is Cytoplasmic. Residues 12-34 (GYSLGDVANNFAFAMGALFLLSY) form a helical membrane-spanning segment. Residues 35–37 (YTD) lie on the Periplasmic side of the membrane. Residues 38-60 (VAGVGAAAAGTMLLLVRVFDAFA) form a helical membrane-spanning segment. Residues 61–79 (DVFAGRVVDSVNTRWGKFR) are Cytoplasmic-facing. Residues 80–100 (PFLLFGTAPLMIFSVLVFWVL) traverse the membrane as a helical segment. Residues 101–108 (TDWSHGSK) are Periplasmic-facing. A helical membrane pass occupies residues 109-129 (VVYAYLTYMGLGLCYSLVNIP). The Cytoplasmic portion of the chain corresponds to 130 to 146 (YGSLATAMTQQPQSRAR). A helical transmembrane segment spans residues 147 to 167 (LGAARGIAASLTFVCLAFLIG). The Periplasmic portion of the chain corresponds to 168–180 (PSIKNSSPEEMVS). Residues 181–201 (VYHFWTIVLAIAGMVLYFICF) traverse the membrane as a helical segment. The Cytoplasmic portion of the chain corresponds to 202 to 228 (KSTRENVVRIVAQPSLNISLQTLKRNR). The helical transmembrane segment at 229–249 (PLFMLCIGALCVLISTFAVSA) threads the bilayer. Topologically, residues 250–263 (SSLFYVRYVLNDTG) are periplasmic. A helical membrane pass occupies residues 264–284 (LFTVLVLVQNLVGTVASAPLV). The Cytoplasmic segment spans residues 285–296 (PGMVARIGKKNT). Residues 297–316 (FLIGALLGTCGYLLFFWVSV) traverse the membrane as a helical segment. The Periplasmic segment spans residues 317–320 (WSLP). A helical membrane pass occupies residues 321 to 343 (VALVALAIASIGQGVTMTVMWAL). Topologically, residues 344-372 (EADTVEYGEYLTGVRIEGLTYSLFSFTRK) are cytoplasmic. A helical transmembrane segment spans residues 373–393 (CGQAIGGSIPAFILGLSGYIA). Over 394–408 (NQVQTPEVIMGIRTS) the chain is Periplasmic. The helical transmembrane segment at 409 to 429 (IALVPCGFMLLAFVIIWFYPL) threads the bilayer. At 430 to 457 (TDKKFKEIVVEIDNRKKVQQQLISDITN) the chain is on the cytoplasmic side.

The protein belongs to the sodium:galactoside symporter (TC 2.A.2) family.

It is found in the cell inner membrane. The sequence is that of Glucuronide carrier protein homolog (uidB) from Escherichia coli (strain K12).